Here is a 196-residue protein sequence, read N- to C-terminus: Large ribosomal subunit protein bL25 (196 aa).

Belongs to the bacterial ribosomal protein bL25 family. CTC subfamily. Part of the 50S ribosomal subunit; part of the 5S rRNA/L5/L18/L25 subcomplex. Contacts the 5S rRNA. Binds to the 5S rRNA independently of L5 and L18.

Its function is as follows. This is one of the proteins that binds to the 5S RNA in the ribosome where it forms part of the central protuberance. This is Large ribosomal subunit protein bL25 from Bacteroides thetaiotaomicron (strain ATCC 29148 / DSM 2079 / JCM 5827 / CCUG 10774 / NCTC 10582 / VPI-5482 / E50).